The following is a 559-amino-acid chain: Glutamine--tRNA ligase (559 aa).

Positions 44-54 (PEPNGYLHIGH) match the 'HIGH' region motif. Residues 45–47 (EPN) and 51–57 (HIGHAKS) each bind ATP. Residues Asp-77 and Tyr-222 each contribute to the L-glutamine site. ATP contacts are provided by residues Thr-241 and 272–273 (RL). The 'KMSKS' region motif lies at 279-283 (LTSKR).

The protein belongs to the class-I aminoacyl-tRNA synthetase family. In terms of assembly, monomer.

It is found in the cytoplasm. The enzyme catalyses tRNA(Gln) + L-glutamine + ATP = L-glutaminyl-tRNA(Gln) + AMP + diphosphate. The chain is Glutamine--tRNA ligase from Actinobacillus succinogenes (strain ATCC 55618 / DSM 22257 / CCUG 43843 / 130Z).